The primary structure comprises 138 residues: Large ribosomal subunit protein uL16 (138 aa).

The segment covering 1–13 (MLQPKRRKYRKEQ) has biased composition (basic residues). Positions 1-20 (MLQPKRRKYRKEQKGRNTGI) are disordered.

It belongs to the universal ribosomal protein uL16 family. As to quaternary structure, part of the 50S ribosomal subunit.

Binds 23S rRNA and is also seen to make contacts with the A and possibly P site tRNAs. The sequence is that of Large ribosomal subunit protein uL16 from Burkholderia mallei (strain NCTC 10247).